Here is a 528-residue protein sequence, read N- to C-terminus: Xylose import ATP-binding protein XylG (528 aa).

2 consecutive ABC transporter domains span residues 6-245 (LQMN…VGRE) and 262-507 (FEAR…LSHP). 38 to 45 (GENGAGKS) is an ATP binding site. The disordered stretch occupies residues 504–528 (LSHPGDPDSNDPANNNHNDNDRKTT).

Belongs to the ABC transporter superfamily. Xylose importer (TC 3.A.1.2.4) family. As to quaternary structure, the complex is composed of two ATP-binding proteins (XylG), two transmembrane proteins (XylH) and a solute-binding protein (XylF).

It is found in the cell inner membrane. It carries out the reaction D-xylose(out) + ATP + H2O = D-xylose(in) + ADP + phosphate + H(+). In terms of biological role, part of the ABC transporter complex XylFGH involved in xylose import. Responsible for energy coupling to the transport system. In Pseudomonas syringae pv. tomato (strain ATCC BAA-871 / DC3000), this protein is Xylose import ATP-binding protein XylG.